Reading from the N-terminus, the 246-residue chain is DNA repair protein RecO (246 aa).

The protein belongs to the RecO family.

In terms of biological role, involved in DNA repair and RecF pathway recombination. The chain is DNA repair protein RecO from Marinobacter nauticus (strain ATCC 700491 / DSM 11845 / VT8) (Marinobacter aquaeolei).